The following is a 376-amino-acid chain: MTQAVGLVGWRGMVGSVLMQRMRDENDFALIEPVFFSTSNAGGAAPAWAEGAGSLQNAYDIDALKKLPIIVTAQGGDYTSEVYPKLRGAGWQGIWIDAASTLRMADDAIIVLDPVNRPVIDAALKRGVRNFVGGNCTVSCMLMGLAGLFNNDLVEWMSSMTYQAASGGGAQHMRELLTQFGLLNQAVKPLLDDPAAAILDIDRGVLARQQDPSLPQEHFGVPLGGNLIPWIDKDLGDGMSREEWKAEAETNKILGRGAAFGTPATPIDGLCVRIGAMRCHSQALTIKLKRDVPLDEIEDLIAAGTQWAKVVPNTKEDTVKALTPVAVTGTLDIPVGRLRKLSMGLQYLGAFTVGDQLLWGAAEPLRRMLRIALAEA.

NADP(+)-binding positions include 11 to 14, 38 to 39, and Q74; these read RGMV and TS. R103 provides a ligand contact to phosphate. C136 functions as the Acyl-thioester intermediate in the catalytic mechanism. Residue Q163 coordinates substrate. Residues 166–167 and P194 contribute to the NADP(+) site; that span reads SG. E242 is a substrate binding site. K245 serves as a coordination point for phosphate. Residue R273 participates in substrate binding. The active-site Proton acceptor is the H280. Residue Q356 coordinates NADP(+).

This sequence belongs to the aspartate-semialdehyde dehydrogenase family. In terms of assembly, homodimer.

The enzyme catalyses L-aspartate 4-semialdehyde + phosphate + NADP(+) = 4-phospho-L-aspartate + NADPH + H(+). Its pathway is amino-acid biosynthesis; L-lysine biosynthesis via DAP pathway; (S)-tetrahydrodipicolinate from L-aspartate: step 2/4. The protein operates within amino-acid biosynthesis; L-methionine biosynthesis via de novo pathway; L-homoserine from L-aspartate: step 2/3. It functions in the pathway amino-acid biosynthesis; L-threonine biosynthesis; L-threonine from L-aspartate: step 2/5. In terms of biological role, catalyzes the NADPH-dependent formation of L-aspartate-semialdehyde (L-ASA) by the reductive dephosphorylation of L-aspartyl-4-phosphate. In Bordetella pertussis (strain Tohama I / ATCC BAA-589 / NCTC 13251), this protein is Aspartate-semialdehyde dehydrogenase.